A 208-amino-acid chain; its full sequence is Small ribosomal subunit protein uS4 (208 aa).

The segment at 28–48 (YMERRPYGPGEHGRARKKQDS) is disordered. Residues 95–160 (MRLDALVLRA…MPPFQVAAAG (66 aa)) form the S4 RNA-binding domain.

Belongs to the universal ribosomal protein uS4 family. Part of the 30S ribosomal subunit. Contacts protein S5. The interaction surface between S4 and S5 is involved in control of translational fidelity.

In terms of biological role, one of the primary rRNA binding proteins, it binds directly to 16S rRNA where it nucleates assembly of the body of the 30S subunit. Its function is as follows. With S5 and S12 plays an important role in translational accuracy. The sequence is that of Small ribosomal subunit protein uS4 from Arthrobacter sp. (strain FB24).